The sequence spans 60 residues: DNA gyrase inhibitor YacG (60 aa).

4 residues coordinate Zn(2+): Cys15, Cys18, Cys30, and Cys34.

It belongs to the DNA gyrase inhibitor YacG family. As to quaternary structure, interacts with GyrB. The cofactor is Zn(2+).

In terms of biological role, inhibits all the catalytic activities of DNA gyrase by preventing its interaction with DNA. Acts by binding directly to the C-terminal domain of GyrB, which probably disrupts DNA binding by the gyrase. The protein is DNA gyrase inhibitor YacG of Nitrobacter hamburgensis (strain DSM 10229 / NCIMB 13809 / X14).